The primary structure comprises 401 residues: MSLEELEAMDQSNPGEFLERVREKIRMLNSETRILQSRVNTIKHDISTKNASIAENMERIRLNKQLPYLVGNVVEVLDEHSGVVNASTRMSSYLPITGLIPNSELRPGDLVALHKDTNIVFEKLPPDYDMKVGGMVLKSDAKPDETYEDIGGLERQIEELNEAIVLSLTHPERFEKLNIKPPKGVLMYGPPGTGKTLMARACASKTNATFLKLAGPQLVQMYIGDGARLVRDAFALAKERKPTIIFIDEIDAIGAKRSDSDQTGDREVQRTMLELLNQLDGFSSSEEVKIIAATNRVDILDPALLRSGRLDRKIEFPLPNTLGRKRILQIHARKMSVRDDVNFDELARSTEGFNGAQCKAVCVEAGMAALRKEKTEISQNDFMDGIQEVLSRKKSKLLYFT.

ATP is bound at residue Gly189 to Thr196.

The protein belongs to the AAA ATPase family. In terms of assembly, the 26S proteasome consists of a 20S proteasome core and two 19S regulatory subunits. The 20S proteasome core is composed of 28 subunits that are arranged in four stacked rings, resulting in a barrel-shaped structure. The two end rings are each formed by seven alpha subunits, and the two central rings are each formed by seven beta subunits. The catalytic chamber with the active sites is on the inside of the barrel.

Its subcellular location is the cytoplasm. The protein localises to the nucleus. Functionally, acts as a regulatory subunit of the 26S proteasome which degrades poly-ubiquitinated proteins in the cytoplasm and in the nucleus. It is essential for the regulated turnover of proteins and for the removal of misfolded proteins. The proteasome is a multicatalytic proteinase complex that is characterized by its ability to cleave peptides with Arg, Phe, Tyr, Leu, and Glu adjacent to the leaving group at neutral or slightly basic pH. The polypeptide is 26S proteasome regulatory subunit 6A (RPT5) (Encephalitozoon cuniculi (strain GB-M1) (Microsporidian parasite)).